The primary structure comprises 448 residues: Exodeoxyribonuclease 7 large subunit (448 aa).

Belongs to the XseA family. Heterooligomer composed of large and small subunits.

The protein resides in the cytoplasm. It carries out the reaction Exonucleolytic cleavage in either 5'- to 3'- or 3'- to 5'-direction to yield nucleoside 5'-phosphates.. Its function is as follows. Bidirectionally degrades single-stranded DNA into large acid-insoluble oligonucleotides, which are then degraded further into small acid-soluble oligonucleotides. The sequence is that of Exodeoxyribonuclease 7 large subunit from Histophilus somni (strain 129Pt) (Haemophilus somnus).